The primary structure comprises 133 residues: Large ribosomal subunit protein uL14 (133 aa).

The protein belongs to the universal ribosomal protein uL14 family. Part of the 50S ribosomal subunit. Forms a cluster with proteins L3 and L19. In the 70S ribosome, L14 and L19 interact and together make contacts with the 16S rRNA in bridges B5 and B8.

Binds to 23S rRNA. Forms part of two intersubunit bridges in the 70S ribosome. The sequence is that of Large ribosomal subunit protein uL14 from Gloeobacter violaceus (strain ATCC 29082 / PCC 7421).